A 141-amino-acid polypeptide reads, in one-letter code: ATP synthase F(0) complex subunit C3, mitochondrial (141 aa).

The N-terminal 66 residues, 1-66, are a transit peptide targeting the mitochondrion; that stretch reads MFACAKLART…REFQTSVISR (66 aa). Residues 82–102 form a helical membrane-spanning segment; that stretch reads VGVAGSGAGIGTVFGSLIIGY. Residue Lys-109 is modified to N6,N6,N6-trimethyllysine. A helical transmembrane segment spans residues 117–137; the sequence is ILGFALSEAMGLFCLMVAFLI.

Belongs to the ATPase C chain family. As to quaternary structure, F-type ATPases have 2 components, CF(1) - the catalytic core - and CF(0) - the membrane proton channel. CF(1) has five subunits: alpha(3), beta(3), gamma(1), delta(1), epsilon(1). CF(0) has three main subunits: a, b and c. Interacts with TMEM70 and TMEM242. In terms of processing, trimethylated by ATPSCKMT at Lys-109. Methylation is required for proper incorporation of the C subunit into the ATP synthase complex and mitochondrial respiration.

The protein localises to the mitochondrion membrane. In terms of biological role, mitochondrial membrane ATP synthase (F(1)F(0) ATP synthase or Complex V) produces ATP from ADP in the presence of a proton gradient across the membrane which is generated by electron transport complexes of the respiratory chain. F-type ATPases consist of two structural domains, F(1) - containing the extramembraneous catalytic core and F(0) - containing the membrane proton channel, linked together by a central stalk and a peripheral stalk. During catalysis, ATP synthesis in the catalytic domain of F(1) is coupled via a rotary mechanism of the central stalk subunits to proton translocation. Part of the complex F(0) domain. A homomeric c-ring of probably 10 subunits is part of the complex rotary element. This Mus musculus (Mouse) protein is ATP synthase F(0) complex subunit C3, mitochondrial.